The primary structure comprises 196 residues: Protein GrpE (196 aa).

Positions 1–26 are enriched in basic and acidic residues; it reads MQEPHNQEPIEEQKLSEMEDTLEKQH. The tract at residues 1–40 is disordered; that stretch reads MQEPHNQEPIEEQKLSEMEDTLEKQHSGASTENTERAEEG.

The protein belongs to the GrpE family. Homodimer.

It localises to the cytoplasm. Its function is as follows. Participates actively in the response to hyperosmotic and heat shock by preventing the aggregation of stress-denatured proteins, in association with DnaK and GrpE. It is the nucleotide exchange factor for DnaK and may function as a thermosensor. Unfolded proteins bind initially to DnaJ; upon interaction with the DnaJ-bound protein, DnaK hydrolyzes its bound ATP, resulting in the formation of a stable complex. GrpE releases ADP from DnaK; ATP binding to DnaK triggers the release of the substrate protein, thus completing the reaction cycle. Several rounds of ATP-dependent interactions between DnaJ, DnaK and GrpE are required for fully efficient folding. This Nitrosomonas eutropha (strain DSM 101675 / C91 / Nm57) protein is Protein GrpE.